The primary structure comprises 153 residues: Bacteriohemerythrin (153 aa).

The Fe cation site is built by histidine 21, histidine 57, glutamate 61, histidine 76, histidine 80, histidine 115, and aspartate 120.

It belongs to the hemerythrin family. As to quaternary structure, monomer.

In terms of biological role, oxygen-binding protein. May be involved in a storage mechanism or for delivery to oxygen-requiring enzymes. The oxygen-binding site contains two iron atoms. This is Bacteriohemerythrin from Pseudomonas aeruginosa (strain UCBPP-PA14).